Reading from the N-terminus, the 870-residue chain is Protein translocase subunit SecA (870 aa).

Residues Gln86, Gly104 to Thr108, and Asp499 contribute to the ATP site. The Zn(2+) site is built by Cys854, Cys856, Cys865, and His866.

The protein belongs to the SecA family. Monomer and homodimer. Part of the essential Sec protein translocation apparatus which comprises SecA, SecYEG and auxiliary proteins SecDF-YajC and YidC. Requires Zn(2+) as cofactor.

The protein localises to the cell inner membrane. It localises to the cytoplasm. It catalyses the reaction ATP + H2O + cellular proteinSide 1 = ADP + phosphate + cellular proteinSide 2.. Its function is as follows. Part of the Sec protein translocase complex. Interacts with the SecYEG preprotein conducting channel. Has a central role in coupling the hydrolysis of ATP to the transfer of proteins into and across the cell membrane, serving both as a receptor for the preprotein-SecB complex and as an ATP-driven molecular motor driving the stepwise translocation of polypeptide chains across the membrane. This is Protein translocase subunit SecA from Ehrlichia ruminantium (strain Welgevonden).